Here is a 334-residue protein sequence, read N- to C-terminus: MKKNQFLKESDVTAESVFFMKRRQVLKALGISATALSLPHAAHADLLSWFKGNDRPPAPAGKALEFSKPAAWQNNLPLTPADKVSGYNNFYEFGLDKADPAANAGSLKTDPWTLKISGEVAKPLTLDHDDLTRRFPLEERIYRMRCVEAWSMVVPWIGFPLHKLLALAEPTSNAKYVAFETIYAPEQMPGQQDRFIGGGLKYPYVEGLRLDEAMHPLTLMTVGVYGKALPPQNGAPVRLIVPWKYGFKGIKSIVSIKLTRERPPTTWNLAAPDEYGFYANVNPYVDHPRWSQATERFIGSGGILDVQRQPTLLFNGYAAQVASLYRGLDLRENF.

The tat-type signal signal peptide spans M1–A44. Mo-molybdopterin is bound by residues N88, Y91–E92, C146, T181, N233, R238, and G249–K251.

The protein belongs to the MsrP family. Heterodimer of a catalytic subunit (MsrP) and a heme-binding subunit (MsrQ). It depends on Mo-molybdopterin as a cofactor. Exported by the Tat system. Can also be exported by the Sec system.

It localises to the periplasm. The catalysed reaction is L-methionyl-[protein] + a quinone + H2O = L-methionyl-(S)-S-oxide-[protein] + a quinol. The enzyme catalyses L-methionyl-[protein] + a quinone + H2O = L-methionyl-(R)-S-oxide-[protein] + a quinol. In terms of biological role, part of the MsrPQ system that repairs oxidized periplasmic proteins containing methionine sulfoxide residues (Met-O), using respiratory chain electrons. Thus protects these proteins from oxidative-stress damage caused by reactive species of oxygen and chlorine. MsrPQ is essential for the maintenance of envelope integrity under bleach stress, rescuing a wide series of structurally unrelated periplasmic proteins from methionine oxidation, including the primary periplasmic chaperone SurA and the lipoprotein Pal. The catalytic subunit MsrP is non-stereospecific, being able to reduce both (R-) and (S-) diastereoisomers of methionine sulfoxide. Can catalyze the reduction of a variety of substrates in vitro, including dimethyl sulfoxide, trimethylamine N-oxide, phenylmethyl sulfoxide and L-methionine sulfoxide. Cannot reduce cyclic N-oxides. Shows no activity as sulfite oxidase. The polypeptide is Protein-methionine-sulfoxide reductase catalytic subunit MsrP (Escherichia coli (strain K12)).